Consider the following 408-residue polypeptide: MKVLVINAGSSSLKYQLIDMTNESPLAIGLCERIGIDNSIITQKRSDGKKLEKQTDLPNHKVALEEVVKALTDSELGVIKSMDEINAVGHRVVHGGEKFTSSALIDEGVEQAIKDCFELAPLHNPPNMMGITACQEIMPGVPMVAVFDTAFHQTIPAYAYMYALPYTLYEKYGIRKYGFHGTSHFYVARRAAAMLGKPEEEVKVITCHLGNGSSITAVNGGKSVETTMGFTPLEGVAMGTRCGSIDPAVVPFVMEKEGLTTREIDTLMNKKSGVLGVSGLSNDFRDLDEAASKGNQRAELALEIFAYKIKKVIGEYSAVLNGADAVVFTAGIGENSASIRKRILSGLDGLGIEIDEEKNKIRGQEIDISTPDAKVRVLVIPTNEELTIARDTKEICETEVKLRRSVSI.

Asparagine 7 is a Mg(2+) binding site. Lysine 14 lines the ATP pocket. A substrate-binding site is contributed by arginine 91. Aspartate 148 acts as the Proton donor/acceptor in catalysis. ATP is bound by residues 208–212 (HLGNG), 283–285 (DFR), and 331–335 (GIGEN). Glutamate 384 serves as a coordination point for Mg(2+).

The protein belongs to the acetokinase family. As to quaternary structure, homodimer. Mg(2+) serves as cofactor. Requires Mn(2+) as cofactor.

The protein localises to the cytoplasm. It catalyses the reaction acetate + ATP = acetyl phosphate + ADP. Its pathway is metabolic intermediate biosynthesis; acetyl-CoA biosynthesis; acetyl-CoA from acetate: step 1/2. In terms of biological role, catalyzes the formation of acetyl phosphate from acetate and ATP. Can also catalyze the reverse reaction. The sequence is that of Acetate kinase from Methanosarcina acetivorans (strain ATCC 35395 / DSM 2834 / JCM 12185 / C2A).